A 267-amino-acid chain; its full sequence is MQREEKQLEACLDALISQVSDIKNSLVGFIHKLENEYDRLTWPSVLDSFALLSGQLNTLNKVLKNEKTPLLRNQVIIPLLLSPDRDEEIMRLTEGRVPVFSHEVVPDHLRTKPDPDVEELEKQLSAEAARITSEAAQKQVQSMNKMCSNLLDKISKEERESELGSLRQNKQTFNPTDTNALVAAVAFGKGLSNRRPPGQGGPMAPGQTGASSMLPNATGMQVPMSLPPNQQQQHMAGVSMSQGSQPGKMPSSIKTNIKSASMHPYQR.

Coiled coils occupy residues 1-26 (MQRE…KNSL) and 116-160 (DVEE…EERE). Residues 190 to 267 (GLSNRRPPGQ…KSASMHPYQR (78 aa)) are disordered. Polar residues predominate over residues 227–245 (PPNQQQQHMAGVSMSQGSQ).

It belongs to the Mediator complex subunit 8 family. In terms of assembly, component of the Mediator complex. May be part of a multisubunit E3 ubiquitin-protein ligase complex.

It localises to the nucleus. It functions in the pathway protein modification; protein ubiquitination. Component of the Mediator complex, a coactivator involved in the regulated transcription of nearly all RNA polymerase II-dependent genes. Mediator functions as a bridge to convey information from gene-specific regulatory proteins to the basal RNA polymerase II transcription machinery. Mediator is recruited to promoters by direct interactions with regulatory proteins and serves as a scaffold for the assembly of a functional preinitiation complex with RNA polymerase II and the general transcription factors. May play a role as a target recruitment subunit in E3 ubiquitin-protein ligase complexes and thus in ubiquitination and subsequent proteasomal degradation of target proteins. The chain is Mediator of RNA polymerase II transcription subunit 8 (med8) from Xenopus tropicalis (Western clawed frog).